The sequence spans 341 residues: tRNA N6-adenosine threonylcarbamoyltransferase (341 aa).

Residues H115 and H119 each contribute to the Fe cation site. Substrate-binding positions include 138 to 142, D171, G184, and N276; that span reads LVSGG. Fe cation is bound at residue D304.

The protein belongs to the KAE1 / TsaD family. The cofactor is Fe(2+).

It is found in the cytoplasm. The enzyme catalyses L-threonylcarbamoyladenylate + adenosine(37) in tRNA = N(6)-L-threonylcarbamoyladenosine(37) in tRNA + AMP + H(+). Functionally, required for the formation of a threonylcarbamoyl group on adenosine at position 37 (t(6)A37) in tRNAs that read codons beginning with adenine. Is involved in the transfer of the threonylcarbamoyl moiety of threonylcarbamoyl-AMP (TC-AMP) to the N6 group of A37, together with TsaE and TsaB. TsaD likely plays a direct catalytic role in this reaction. In Stenotrophomonas maltophilia (strain R551-3), this protein is tRNA N6-adenosine threonylcarbamoyltransferase.